We begin with the raw amino-acid sequence, 313 residues long: Porphobilinogen deaminase (313 aa).

Cys241 is modified (S-(dipyrrolylmethanemethyl)cysteine).

Belongs to the HMBS family. Monomer. Requires dipyrromethane as cofactor.

The enzyme catalyses 4 porphobilinogen + H2O = hydroxymethylbilane + 4 NH4(+). It functions in the pathway porphyrin-containing compound metabolism; protoporphyrin-IX biosynthesis; coproporphyrinogen-III from 5-aminolevulinate: step 2/4. Tetrapolymerization of the monopyrrole PBG into the hydroxymethylbilane pre-uroporphyrinogen in several discrete steps. The polypeptide is Porphobilinogen deaminase (Bacillus velezensis (strain DSM 23117 / BGSC 10A6 / LMG 26770 / FZB42) (Bacillus amyloliquefaciens subsp. plantarum)).